Consider the following 476-residue polypeptide: MAQYSAEFKQAKVLVLGDVMLDRYWFGATNRISPEAPVPVVRVQENEERAGGAANVAMNIASLNVPVQLMGLIGQDETGSALSLLLEKQKIDCNFVALETHPTITKLRILSRHQQLLRLDFEEDFNNVDCKDLLAKLESAVKNYGALILSDYGKGTLKDVQKMIQIARKANVPVLIDPKGTDFERYRGATLLTPNMSEFEAVVGKCNTEEEIIEKGLKLISDIELTALLVTRSEKGMTLLRPNQEPYHLPTVAKEVFDVTGAGDTVISVLATALADGRSFEESCYLANVAAGIVVGKLGTSTVSTVELENAIHARPETGFGIMSEAELKDAVAQAKARGEKIVMTNGCFDILHPGHISYLENARKLGDRLIVAVNSDDSVKRLKGESRPINNLENRMAVLAGLASVDWLVPFTEDTPQRLIGEILPDLLVKGGDYKPEEIAGSKEVWANGGDVKVLNFENGCSTTNVIEKIKLLKD.

Residues methionine 1–threonine 318 are ribokinase. Asparagine 195–glutamate 198 contacts ATP. Residue aspartate 264 is part of the active site. The cytidylyltransferase stretch occupies residues methionine 344–aspartate 476.

It in the N-terminal section; belongs to the carbohydrate kinase PfkB family. In the C-terminal section; belongs to the cytidylyltransferase family. Homodimer.

The catalysed reaction is D-glycero-beta-D-manno-heptose 7-phosphate + ATP = D-glycero-beta-D-manno-heptose 1,7-bisphosphate + ADP + H(+). It catalyses the reaction D-glycero-beta-D-manno-heptose 1-phosphate + ATP + H(+) = ADP-D-glycero-beta-D-manno-heptose + diphosphate. It functions in the pathway nucleotide-sugar biosynthesis; ADP-L-glycero-beta-D-manno-heptose biosynthesis; ADP-L-glycero-beta-D-manno-heptose from D-glycero-beta-D-manno-heptose 7-phosphate: step 1/4. The protein operates within nucleotide-sugar biosynthesis; ADP-L-glycero-beta-D-manno-heptose biosynthesis; ADP-L-glycero-beta-D-manno-heptose from D-glycero-beta-D-manno-heptose 7-phosphate: step 3/4. Its pathway is bacterial outer membrane biogenesis; LOS core biosynthesis. Catalyzes the phosphorylation of D-glycero-D-manno-heptose 7-phosphate at the C-1 position to selectively form D-glycero-beta-D-manno-heptose-1,7-bisphosphate. Functionally, catalyzes the ADP transfer from ATP to D-glycero-beta-D-manno-heptose 1-phosphate, yielding ADP-D-glycero-beta-D-manno-heptose. This is Bifunctional protein HldE from Haemophilus influenzae (strain ATCC 51907 / DSM 11121 / KW20 / Rd).